The chain runs to 957 residues: ERC protein 2 (957 aa).

Residues 1-13 are compositionally biased toward polar residues; the sequence is MYGSARTISNPEG. The segment at 1–44 is disordered; sequence MYGSARTISNPEGSPSRSPRLPRSPRLGHRRTSSGGGGGTGKTL. Residues 14–25 show a composition bias toward low complexity; sequence SPSRSPRLPRSP. 2 positions are modified to phosphoserine: Ser-65 and Ser-666. A coiled-coil region spans residues 140–917; it reads RQVRDSTMLD…RMKLMADNYD (778 aa). Positions 760-957 are involved in binding to RIMS1; the sequence is DQNKKVANLK…DQDDEEGIWA (198 aa). The segment at 918 to 957 is disordered; that stretch reads DDHHHYHHHHHHHHHRSPGRSQHSNHRPSPDQDDEEGIWA. Residues 922-943 show a composition bias toward basic residues; it reads HYHHHHHHHHHRSPGRSQHSNH. Over residues 948 to 957 the composition is skewed to acidic residues; the sequence is DQDDEEGIWA.

As to quaternary structure, interacts with BSN, ERC1, PPFIA1, PPFIA2, PPFIA3 and PPFIA4. Interacts through its C-terminus with the PDZ domain of RIMS1. Part of a complex consisting of ERC2, RIMS1 and UNC13A. As to expression, predominantly expressed in brain, including hippocampus, cortex, cerebellum, amygdala and olfactory bulb.

Its subcellular location is the cytoplasm. It localises to the synapse. The protein localises to the presynaptic active zone. The protein resides in the cytoskeleton. Thought to be involved in the organization of the cytomatrix at the nerve terminals active zone (CAZ) which regulates neurotransmitter release. Seems to act together with BSN. May recruit liprin-alpha proteins to the CAZ. The chain is ERC protein 2 (Erc2) from Rattus norvegicus (Rat).